The primary structure comprises 238 residues: Probable transcriptional regulatory protein VV2_1184 (238 aa).

This sequence belongs to the TACO1 family.

The protein resides in the cytoplasm. In Vibrio vulnificus (strain CMCP6), this protein is Probable transcriptional regulatory protein VV2_1184.